The following is a 275-amino-acid chain: Nitrogenase iron protein 3 (275 aa).

9 to 16 provides a ligand contact to ATP; it reads GKGGIGKS. Residue Cys-97 coordinates [4Fe-4S] cluster. Residue Arg-100 is modified to ADP-ribosylarginine; by dinitrogenase reductase ADP-ribosyltransferase. Residue Cys-132 participates in [4Fe-4S] cluster binding.

The protein belongs to the NifH/BchL/ChlL family. In terms of assembly, homodimer. [4Fe-4S] cluster is required as a cofactor. The reversible ADP-ribosylation of Arg-100 inactivates the nitrogenase reductase and regulates nitrogenase activity.

It catalyses the reaction N2 + 8 reduced [2Fe-2S]-[ferredoxin] + 16 ATP + 16 H2O = H2 + 8 oxidized [2Fe-2S]-[ferredoxin] + 2 NH4(+) + 16 ADP + 16 phosphate + 6 H(+). Functionally, the key enzymatic reactions in nitrogen fixation are catalyzed by the nitrogenase complex, which has 2 components: the iron protein (component 2) and a component 1 which is either a molybdenum-iron protein, a vanadium-iron, or an iron-iron protein. The chain is Nitrogenase iron protein 3 (anfH) from Azotobacter vinelandii.